We begin with the raw amino-acid sequence, 540 residues long: Chaperonin GroEL 1 (540 aa).

Residues 30–33 (TLGP), K51, 87–91 (DGTTT), G415, 480–482 (NAA), and D496 each bind ATP.

Belongs to the chaperonin (HSP60) family. Forms a cylinder of 14 subunits composed of two heptameric rings stacked back-to-back. Interacts with the co-chaperonin GroES.

It localises to the cytoplasm. The catalysed reaction is ATP + H2O + a folded polypeptide = ADP + phosphate + an unfolded polypeptide.. Functionally, together with its co-chaperonin GroES, plays an essential role in assisting protein folding. The GroEL-GroES system forms a nano-cage that allows encapsulation of the non-native substrate proteins and provides a physical environment optimized to promote and accelerate protein folding. The protein is Chaperonin GroEL 1 of Bradyrhizobium diazoefficiens (strain JCM 10833 / BCRC 13528 / IAM 13628 / NBRC 14792 / USDA 110).